The primary structure comprises 716 residues: MIYQSPTIQVELTADKIARLCFNAPGSVNKFDRETLASLNAALDVLKDSDAKAAVLTSGKDTFIVGADITEFLALFAEEDAKLMEWIAQANVVFNKLEDLPFPTVSAIKGFALGGGCEAILATDFRVADTSAKIGLPETKLGLIPGFGGTVRLPRLIGADNALEWITTGKDQRPEDALKVGAIDAVVAPENLEAAAIQMLNDALAGKLDWQARRARKQAPLTLPKLEAMMSFTTAKGMVYAVAGKHYPAPMAAVSVVEQAAGMSRAEALVVEHNAFIKLAKTDVATALIGIFLNDQLVKGKAKKASKLAKDIKHAAVLGAGIMGGGIAYQSASKGTPIVMKDINQAALDLGVNEAAKLLSAQVARGRSTPDKMAKVLNNITPALDYAPLKDVNVVVEAVVENPKVKAMVLADVENVVADDAIIASNTSTISIDLLAKSLKNPARFCGMHFFNPVHKMPLVEVIRGKDTSEETVASVVAYASKMGKTPIVVNDCPGFFVNRVLFPYFAGFNGLLADGGDFAAIDKVMEKQFGWPMGPAYLLDVVGLDTGHHAQAVMADGFPDRMGKSDKDAIDVMYEAGRLGQKNGKGFYQYSIDKRGKPKKDVDPASYTMLAEAFGAQKAFEADEIIARTMIPMIIETVRCLEEGIVASPAEADMGLVYGLGFPPFRGGVFRYLDTMGVANFVALADKYAHLGGLYQVTDAMRELASNNGSYYPKA.

Positions 1–188 (MIYQSPTIQV…KVGAIDAVVA (188 aa)) are enoyl-CoA hydratase/isomerase. Asp295 is a substrate binding site. The interval 310-716 (KDIKHAAVLG…SNNGSYYPKA (407 aa)) is 3-hydroxyacyl-CoA dehydrogenase. Residues Met323, Asp342, 399 to 401 (VVE), Lys406, and Ser428 contribute to the NAD(+) site. The active-site For 3-hydroxyacyl-CoA dehydrogenase activity is the His449. Asn452 is a binding site for NAD(+). Asn499 and Tyr659 together coordinate substrate.

The protein in the N-terminal section; belongs to the enoyl-CoA hydratase/isomerase family. In the C-terminal section; belongs to the 3-hydroxyacyl-CoA dehydrogenase family. Heterotetramer of two alpha chains (FadB) and two beta chains (FadA).

The enzyme catalyses a (3S)-3-hydroxyacyl-CoA + NAD(+) = a 3-oxoacyl-CoA + NADH + H(+). It catalyses the reaction a (3S)-3-hydroxyacyl-CoA = a (2E)-enoyl-CoA + H2O. The catalysed reaction is a 4-saturated-(3S)-3-hydroxyacyl-CoA = a (3E)-enoyl-CoA + H2O. It carries out the reaction (3S)-3-hydroxybutanoyl-CoA = (3R)-3-hydroxybutanoyl-CoA. The enzyme catalyses a (3Z)-enoyl-CoA = a 4-saturated (2E)-enoyl-CoA. It catalyses the reaction a (3E)-enoyl-CoA = a 4-saturated (2E)-enoyl-CoA. It functions in the pathway lipid metabolism; fatty acid beta-oxidation. Functionally, involved in the aerobic and anaerobic degradation of long-chain fatty acids via beta-oxidation cycle. Catalyzes the formation of 3-oxoacyl-CoA from enoyl-CoA via L-3-hydroxyacyl-CoA. It can also use D-3-hydroxyacyl-CoA and cis-3-enoyl-CoA as substrate. The polypeptide is Fatty acid oxidation complex subunit alpha (Shewanella amazonensis (strain ATCC BAA-1098 / SB2B)).